The chain runs to 115 residues: Large ribosomal subunit protein uL18 (115 aa).

The protein belongs to the universal ribosomal protein uL18 family. In terms of assembly, part of the 50S ribosomal subunit; part of the 5S rRNA/L5/L18/L25 subcomplex. Contacts the 5S and 23S rRNAs.

In terms of biological role, this is one of the proteins that bind and probably mediate the attachment of the 5S RNA into the large ribosomal subunit, where it forms part of the central protuberance. This Marinobacter nauticus (strain ATCC 700491 / DSM 11845 / VT8) (Marinobacter aquaeolei) protein is Large ribosomal subunit protein uL18.